A 328-amino-acid polypeptide reads, in one-letter code: Cell division protein ZipA (328 aa).

Over Met-1–Asn-4 the chain is Periplasmic. Residues Thr-5–Ser-25 traverse the membrane as a helical segment. Topologically, residues Asn-26–Val-328 are cytoplasmic. Residues Thr-43–Val-82 are disordered. The span at Gln-57–Val-67 shows a compositional bias: polar residues.

It belongs to the ZipA family. Interacts with FtsZ via their C-terminal domains.

Its subcellular location is the cell inner membrane. Its function is as follows. Essential cell division protein that stabilizes the FtsZ protofilaments by cross-linking them and that serves as a cytoplasmic membrane anchor for the Z ring. Also required for the recruitment to the septal ring of downstream cell division proteins. The chain is Cell division protein ZipA from Haemophilus influenzae (strain PittEE).